Reading from the N-terminus, the 122-residue chain is Large ribosomal subunit protein bL19 (122 aa).

Belongs to the bacterial ribosomal protein bL19 family.

Its function is as follows. This protein is located at the 30S-50S ribosomal subunit interface and may play a role in the structure and function of the aminoacyl-tRNA binding site. The sequence is that of Large ribosomal subunit protein bL19 from Chlamydia felis (strain Fe/C-56) (Chlamydophila felis).